The primary structure comprises 71 residues: Protein CYSTEINE-RICH TRANSMEMBRANE MODULE 3 (71 aa).

A disordered region spans residues 30-49 (VMMKDSPQTVQPPHEGQSKG). The chain crosses the membrane as a helical span at residues 48–64 (KGSGGFLRGCLAAMCCC).

Belongs to the CYSTM1 family. As to quaternary structure, heterodimers. Interacts with CYSTM7 and WIH1/CYSTM13. In terms of tissue distribution, mostly expressed in leaves and flowers and, to a lower extent, in stems, siliques, shoots and roots.

Its subcellular location is the cell membrane. It is found in the cytoplasm. It localises to the mitochondrion. In terms of biological role, negatively regulates salt stress responses and Na(+) homeostasis. Prevents Na(+) efflux, disturbs reactive oxygen species (ROS) homeostasis, and represses the expression of nuclear salt stress-responsive genes. Involved in resistance to abiotic stress. This chain is Protein CYSTEINE-RICH TRANSMEMBRANE MODULE 3, found in Arabidopsis thaliana (Mouse-ear cress).